A 329-amino-acid chain; its full sequence is D-threo-aldose 1-dehydrogenase (329 aa).

Tyr-58 (proton donor) is an active-site residue. His-145 is a substrate binding site.

It belongs to the aldo/keto reductase family.

The catalysed reaction is a D-threo-aldose + NAD(+) = a D-threo-aldono-1,5-lactone + NADH + H(+). Inhibited strongly by Hg(2+), Cd(2+) and para-chloromercuribenzoic acid (PCMB) and weakly by Zn(2+) and iodoacetamide. Also inhibited strongly by L-xylose but not D-glucose. In terms of biological role, catalyzes the oxidation of L-fucose to L-fuconolactone in the presence of NADP(+). Also active against L-galactose and, to a much lesser degree, D-arabinose. Uses NADP(+) as a hydrogen acceptor much more efficiently than NAD(+). The sequence is that of D-threo-aldose 1-dehydrogenase from Pseudomonas sp.